The following is a 599-amino-acid chain: Proline dehydrogenase 1, mitochondrial (599 aa).

Disordered regions lie at residues 20–39 and 152–180; these read STKPQAQEQPPASPEALRGC and EEAERKEMESCTSEAERDGSGANKREKQY. Residues 23-39 are compositionally biased toward low complexity; sequence PQAQEQPPASPEALRGC. Over residues 153–180 the composition is skewed to basic and acidic residues; that stretch reads EAERKEMESCTSEAERDGSGANKREKQY. N6-acetyllysine is present on residues Lys356, Lys367, and Lys485.

It belongs to the proline oxidase family. It depends on FAD as a cofactor. Expressed in liver, kidney, heart and to a lesser extent in brain, lung and muscle.

Its subcellular location is the mitochondrion matrix. It catalyses the reaction L-proline + a quinone = (S)-1-pyrroline-5-carboxylate + a quinol + H(+). It functions in the pathway amino-acid degradation; L-proline degradation into L-glutamate; L-glutamate from L-proline: step 1/2. In terms of biological role, converts proline to delta-1-pyrroline-5-carboxylate. The sequence is that of Proline dehydrogenase 1, mitochondrial (Prodh) from Mus musculus (Mouse).